The sequence spans 426 residues: Tol-Pal system protein TolB (426 aa).

The signal sequence occupies residues M1–A24.

It belongs to the TolB family. The Tol-Pal system is composed of five core proteins: the inner membrane proteins TolA, TolQ and TolR, the periplasmic protein TolB and the outer membrane protein Pal. They form a network linking the inner and outer membranes and the peptidoglycan layer.

Its subcellular location is the periplasm. Part of the Tol-Pal system, which plays a role in outer membrane invagination during cell division and is important for maintaining outer membrane integrity. This is Tol-Pal system protein TolB from Actinobacillus pleuropneumoniae serotype 3 (strain JL03).